The sequence spans 516 residues: 4-hydroxybenzoate brominase (decarboxylating) (516 aa).

The FAD site is built by Ser13, Glu32, Val40, Phe41, His51, Val102, and Gln365.

It belongs to the FMO family. The cofactor is FAD.

It catalyses the reaction 2 bromide + 4-hydroxybenzoate + 2 NADPH + 2 O2 + 5 H(+) = 2,4-dibromophenol + CO2 + 2 NADP(+) + 4 H2O. It carries out the reaction bromide + 4-hydroxybenzoate + NADPH + O2 + 2 H(+) = 3-bromo-4-hydroxybenzoate + NADP(+) + 2 H2O. The catalysed reaction is 3-bromo-4-hydroxybenzoate + bromide + NADPH + O2 + 3 H(+) = 2,4-dibromophenol + CO2 + NADP(+) + 2 H2O. The enzyme catalyses 3,4-dihydroxybenzoate + 2 bromide + 2 NADPH + 2 O2 + 5 H(+) = 3,5-dibromobenzene-1,2-diol + CO2 + 2 NADP(+) + 4 H2O. It catalyses the reaction 3,4-dihydroxybenzoate + bromide + NADPH + O2 + 2 H(+) = 3-bromo-4,5-dihydroxybenzoate + NADP(+) + 2 H2O. It carries out the reaction 3-bromo-4,5-dihydroxybenzoate + bromide + NADPH + O2 + 3 H(+) = 3,5-dibromobenzene-1,2-diol + CO2 + NADP(+) + 2 H2O. Its function is as follows. Brominase involved in the biosynthesis of polybrominated aromatic organic compounds. Catalyzes the bromination of 4-hydroxybenzoate (4-HBA) to 3-bromo-4-hydroxybenzoate, followed by bromination and decarboxylation of 3-bromo-4-hydroxybenzoate to 2,4-dibromophenol. Can also use 3,4-dihydroxybenzoate, with lower efficiency, forming 3-bromo-4,5-dihydroxybenzoate and 3,5-dibromobenzene-1,2-diol. In Marinomonas mediterranea (strain ATCC 700492 / JCM 21426 / NBRC 103028 / MMB-1), this protein is 4-hydroxybenzoate brominase (decarboxylating).